Here is a 345-residue protein sequence, read N- to C-terminus: MKEIKTMEFRDGVLYLIDQRKLPLSYEFFECRTYQDVDFAIKDMVVRGAPAIGAAAAYGVVLAAQQFMKEEKENFLKNMENALNVLSKSRPTAVNLTWAIGRMRGVLEKVKDLSVSDIYEALKEEANKIYFEDLETNKKMAKIGNEVIKPNAVILTHCNTGALATVGYGTALGVIREAHYSGKNIFVYADETRPRLQGAKLTAWELVQEGIPAKLIADSVAATLIRDGKIDIILVGADRIALNGDTANKIGTFMLSVVAKVYNVPFYVVAPTSTIDFNIETGAEIVIEERSPEEVTHINGVRIAPEGIDVYNPAFDVTPHENITGIITEKGIIRPPFRENILKLR.

Residues 47 to 49, R90, and Q197 each bind substrate; that span reads RGA. D238 functions as the Proton donor in the catalytic mechanism. Position 248 to 249 (248 to 249) interacts with substrate; sequence NK.

Belongs to the eIF-2B alpha/beta/delta subunits family. MtnA subfamily.

The catalysed reaction is 5-(methylsulfanyl)-alpha-D-ribose 1-phosphate = 5-(methylsulfanyl)-D-ribulose 1-phosphate. Its pathway is amino-acid biosynthesis; L-methionine biosynthesis via salvage pathway; L-methionine from S-methyl-5-thio-alpha-D-ribose 1-phosphate: step 1/6. Catalyzes the interconversion of methylthioribose-1-phosphate (MTR-1-P) into methylthioribulose-1-phosphate (MTRu-1-P). The protein is Methylthioribose-1-phosphate isomerase of Caldanaerobacter subterraneus subsp. tengcongensis (strain DSM 15242 / JCM 11007 / NBRC 100824 / MB4) (Thermoanaerobacter tengcongensis).